A 312-amino-acid polypeptide reads, in one-letter code: Protein dif-1 (312 aa).

Solcar repeat units lie at residues 2-93 (SDVL…GKWL), 102-193 (MTFI…LKKK), and 203-289 (LSPG…TLAA). 6 helical membrane-spanning segments follow: residues 5–25 (LLNFIAGGVGGSCTVIVGHPF), 69–89 (MAAPLVGVSPLFAVFFGGCAV), 104–124 (FIQNANAGALAGVFTTIVMVP), 172–192 (TLLRDIPASAAYLSVYEYLKK), 209–229 (LMAGGLAGIANWGVCIPADVL), and 261–282 (LFKGFWPVMLRAFPANAACFFG).

Belongs to the mitochondrial carrier (TC 2.A.29) family.

It is found in the mitochondrion inner membrane. In terms of biological role, seems to play a role in the maintenance of tissue differentiation in the developing embryo, but not for its initiation. The polypeptide is Protein dif-1 (dif-1) (Caenorhabditis elegans).